We begin with the raw amino-acid sequence, 320 residues long: Acetyl-coenzyme A carboxylase carboxyl transferase subunit beta (320 aa).

The region spanning 25-294 is the CoA carboxyltransferase N-terminal domain; that stretch reads VWTKCDSCGQ…AKDEDELLGE (270 aa). Cys-29, Cys-32, Cys-48, and Cys-51 together coordinate Zn(2+). Residues 29–51 form a C4-type zinc finger; it reads CDSCGQVLYRAELERNLEVCPKC. Positions 295 to 310 are enriched in acidic residues; it reads EMIADDIESSDNEPEI. Positions 295–320 are disordered; that stretch reads EMIADDIESSDNEPEINIETNKKEDV.

Belongs to the AccD/PCCB family. As to quaternary structure, acetyl-CoA carboxylase is a heterohexamer composed of biotin carboxyl carrier protein (AccB), biotin carboxylase (AccC) and two subunits each of ACCase subunit alpha (AccA) and ACCase subunit beta (AccD). It depends on Zn(2+) as a cofactor.

The protein resides in the cytoplasm. The catalysed reaction is N(6)-carboxybiotinyl-L-lysyl-[protein] + acetyl-CoA = N(6)-biotinyl-L-lysyl-[protein] + malonyl-CoA. Its pathway is lipid metabolism; malonyl-CoA biosynthesis; malonyl-CoA from acetyl-CoA: step 1/1. Functionally, component of the acetyl coenzyme A carboxylase (ACC) complex. Biotin carboxylase (BC) catalyzes the carboxylation of biotin on its carrier protein (BCCP) and then the CO(2) group is transferred by the transcarboxylase to acetyl-CoA to form malonyl-CoA. This is Acetyl-coenzyme A carboxylase carboxyl transferase subunit beta from Proteus mirabilis (strain HI4320).